Reading from the N-terminus, the 200-residue chain is dTTP/UTP pyrophosphatase (200 aa).

D76 acts as the Proton acceptor in catalysis.

It belongs to the Maf family. YhdE subfamily. A divalent metal cation serves as cofactor.

The protein resides in the cytoplasm. The catalysed reaction is dTTP + H2O = dTMP + diphosphate + H(+). The enzyme catalyses UTP + H2O = UMP + diphosphate + H(+). Functionally, nucleoside triphosphate pyrophosphatase that hydrolyzes dTTP and UTP. May have a dual role in cell division arrest and in preventing the incorporation of modified nucleotides into cellular nucleic acids. This Acetivibrio thermocellus (strain ATCC 27405 / DSM 1237 / JCM 9322 / NBRC 103400 / NCIMB 10682 / NRRL B-4536 / VPI 7372) (Clostridium thermocellum) protein is dTTP/UTP pyrophosphatase.